Here is a 486-residue protein sequence, read N- to C-terminus: Cysteine--tRNA ligase (486 aa).

Cysteine 27 serves as a coordination point for Zn(2+). The 'HIGH' region signature appears at proline 29 to asparagine 39. Cysteine 207, histidine 232, and glutamate 236 together coordinate Zn(2+). Positions lysine 264 to serine 268 match the 'KMSKS' region motif. Lysine 267 is a binding site for ATP.

This sequence belongs to the class-I aminoacyl-tRNA synthetase family. As to quaternary structure, monomer. The cofactor is Zn(2+).

The protein resides in the cytoplasm. It catalyses the reaction tRNA(Cys) + L-cysteine + ATP = L-cysteinyl-tRNA(Cys) + AMP + diphosphate. The protein is Cysteine--tRNA ligase of Desulforamulus reducens (strain ATCC BAA-1160 / DSM 100696 / MI-1) (Desulfotomaculum reducens).